The chain runs to 162 residues: Auracyanin-A (162 aa).

An N-terminal signal peptide occupies residues 1–22 (MKITLRMMVLAVLTAMAMVLAA). Residue cysteine 23 is the site of N-palmitoyl cysteine attachment. A lipid anchor (S-diacylglycerol cysteine) is attached at cysteine 23. Positions 42–162 (VTIEIGSKGE…PLMQGKLVVN (121 aa)) constitute a Plastocyanin-like domain. Cu cation contacts are provided by histidine 81, cysteine 146, histidine 151, and methionine 155.

As to quaternary structure, monomer. Cu cation is required as a cofactor.

It localises to the cell membrane. Functionally, probably a soluble electron acceptor for the integral membrane protein electron transfer alternative complex III (ACIII). This chain is Auracyanin-A, found in Chloroflexus aurantiacus (strain ATCC 29366 / DSM 635 / J-10-fl).